An 87-amino-acid polypeptide reads, in one-letter code: U3-theraphotoxin-Hhn1a 12 (87 aa).

A signal peptide spans 1-24 (MVNMKASMFLTFAGLVLLFVVCYA). Residues 25–52 (SESEEKEFPKEMLSSIFAVDKDFKQEER) constitute a propeptide that is removed on maturation. 3 cysteine pairs are disulfide-bonded: C54–C67, C61–C72, and C66–C79.

It belongs to the neurotoxin 10 (Hwtx-1) family. 51 (Hntx-8) subfamily. Hntx-8 sub-subfamily. In terms of tissue distribution, expressed by the venom gland.

The protein resides in the secreted. Functionally, ion channel inhibitor. This Cyriopagopus hainanus (Chinese bird spider) protein is U3-theraphotoxin-Hhn1a 12.